A 1715-amino-acid chain; its full sequence is Rho guanine nucleotide exchange factor TIAM2 (1715 aa).

Polar residues-rich tracts occupy residues 1 to 22 and 218 to 229; these read MGNS…TVTG and GSPSSQRPSPTD. 4 disordered regions span residues 1–27, 174–249, 263–294, and 385–418; these read MGNS…KQKP, FHNG…WYDS, SFLA…SSLS, and TGSL…NAEG. Residue glycine 2 is the site of N-myristoyl glycine attachment. Over residues 235 to 245 the composition is skewed to low complexity; it reads SKGSSLSSESS. The segment covering 395 to 411 has biased composition (basic and acidic residues); that stretch reads LQEPRSMEGSEYFDSHS. The 115-residue stretch at 504–618 folds into the PH 1 domain; it reads VVRKAGWLFF…WVTAIHSACA (115 aa). Residues 665–692 adopt a coiled-coil conformation; that stretch reads PKNRKAIENQIRQWEQNLEKFHMDLFRM. Residues 831–902 form the RBD domain; it reads VQTYVHFQDN…YMQEQVYDEI (72 aa). Residues 911-997 enclose the PDZ domain; it reads DVQLTKTGDM…GLTLVARPVT (87 aa). The disordered stretch occupies residues 1092–1113; the sequence is THTNSMEAPTESHDPPPRPLAR. The DH domain occupies 1120–1314; sequence RLRKVIQELV…EKVASHINEM (195 aa). Positions 1347-1478 constitute a PH 2 domain; sequence LLMHSTVSWL…KVIRSILREN (132 aa). Residues 1515 to 1582 are disordered; it reads SLKGLRTSSS…EGLAEFPDGL (68 aa). The segment covering 1522–1532 has biased composition (low complexity); sequence SSSSEWPSEPS. Positions 1533-1552 are enriched in polar residues; sequence KGNSLDSDECSLSSGTQSSG. The span at 1557–1572 shows a compositional bias: basic and acidic residues; that stretch reads ESRRDSKSTELEKDAQ. Serine 1604 bears the Phosphoserine mark. Threonine 1662 is modified (phosphothreonine).

Belongs to the TIAM family. As to quaternary structure, interacts with MAP1A, MAP1B, PARP1 and YWHAE. Interacts with CD44, PARD3 and MAPK8IP2. Phosphorylated on serine and threonine residues. Phosphorylated on Thr-1662 by Rho-kinase. Its phosphorylation by Rho-kinase inhibits its guanine nucleotide exchange activity, its interaction with MAP1A, MAP1B, PARP1 and YWHAE and reduces its ability to promote neurite growth. Expressed in fetal brain (at protein level). Expressed in the olfactory bulb, cortical plate of the cerebral cortex, caudate putamen, hippocampus, ependymal cells of the lateral surface of the lateral ventricles of the brain. Weakly expressed in heart, lung, liver, skeletal muscle, kidney and testis.

The protein resides in the cytoplasm. It localises to the cell projection. Its subcellular location is the lamellipodium. It is found in the filopodium. The protein localises to the growth cone. The protein resides in the neuron projection. It localises to the perikaryon. Modulates the activity of RHO-like proteins and connects extracellular signals to cytoskeletal activities. Acts as a GDP-dissociation stimulator protein that stimulates the GDP-GTP exchange activity of RHO-like GTPases and activates them. Activates specifically RAC1, but not CDC42 and RHOA. Mediates extracellular laminin signals to activate Rac1, contributing to neurite growth. Involved in lamellipodial formation and advancement of the growth cone of embryonic hippocampal neurons. Promotes migration of neurons in the cerebral cortex. When overexpressed, induces membrane ruffling accompanied by the accumulation of actin filaments along the altered plasma membrane. This chain is Rho guanine nucleotide exchange factor TIAM2, found in Mus musculus (Mouse).